The chain runs to 127 residues: Ribosome-binding factor A (127 aa).

This sequence belongs to the RbfA family. As to quaternary structure, monomer. Binds 30S ribosomal subunits, but not 50S ribosomal subunits or 70S ribosomes.

Its subcellular location is the cytoplasm. Functionally, one of several proteins that assist in the late maturation steps of the functional core of the 30S ribosomal subunit. Associates with free 30S ribosomal subunits (but not with 30S subunits that are part of 70S ribosomes or polysomes). Required for efficient processing of 16S rRNA. May interact with the 5'-terminal helix region of 16S rRNA. The polypeptide is Ribosome-binding factor A (Rickettsia typhi (strain ATCC VR-144 / Wilmington)).